The following is a 299-amino-acid chain: Probable adenylate kinase 7, mitochondrial (299 aa).

Residues methionine 1–arginine 25 constitute a mitochondrion transit peptide. Glycine 80–alanine 85 provides a ligand contact to ATP. An NMP region spans residues serine 100–valine 129. AMP-binding positions include arginine 106, lysine 127 to valine 129, glycine 157 to arginine 160, and glutamine 164. ATP is bound by residues arginine 190 and leucine 203–phenylalanine 204. The interval glycine 193 to aspartate 237 is LID.

Belongs to the adenylate kinase family.

Its subcellular location is the mitochondrion. It carries out the reaction AMP + ATP = 2 ADP. Functionally, catalyzes the reversible transfer of the terminal phosphate group between ATP and AMP. Plays an important role in cellular energy homeostasis and in adenine nucleotide metabolism. The sequence is that of Probable adenylate kinase 7, mitochondrial from Oryza sativa subsp. japonica (Rice).